The following is a 358-amino-acid chain: Phenylalanine--tRNA ligase alpha subunit (358 aa).

Glu-258 lines the Mg(2+) pocket.

This sequence belongs to the class-II aminoacyl-tRNA synthetase family. Phe-tRNA synthetase alpha subunit type 1 subfamily. As to quaternary structure, tetramer of two alpha and two beta subunits. Mg(2+) serves as cofactor.

The protein resides in the cytoplasm. The enzyme catalyses tRNA(Phe) + L-phenylalanine + ATP = L-phenylalanyl-tRNA(Phe) + AMP + diphosphate + H(+). This is Phenylalanine--tRNA ligase alpha subunit from Rhodospirillum centenum (strain ATCC 51521 / SW).